Reading from the N-terminus, the 260-residue chain is OCIA domain-containing protein 1 (260 aa).

One can recognise an OCIA domain in the interval 1–110 (MDSPLSDGSR…MRLPNSRLGE (110 aa)). The segment at 146-260 (DVYTDEGLNP…KNKYGDSWQD (115 aa)) is disordered. Polar residues predominate over residues 155–164 (PSRSTALNLD). Basic and acidic residues predominate over residues 205 to 215 (EDLRKKNREGY).

It belongs to the OCIAD1 family.

The protein is OCIA domain-containing protein 1 of Drosophila pseudoobscura pseudoobscura (Fruit fly).